We begin with the raw amino-acid sequence, 180 residues long: Nucleoside triphosphate/diphosphate phosphatase (180 aa).

Catalysis depends on Arg-26, which acts as the Proton donor. Mg(2+) contacts are provided by Asn-90, Asp-106, Asp-108, Asp-110, Asp-123, and Glu-126.

The protein belongs to the Ntdp family. The cofactor is Mg(2+).

It carries out the reaction a ribonucleoside 5'-triphosphate + H2O = a ribonucleoside 5'-diphosphate + phosphate + H(+). The enzyme catalyses a ribonucleoside 5'-diphosphate + H2O = a ribonucleoside 5'-phosphate + phosphate + H(+). Its function is as follows. Has nucleoside phosphatase activity towards nucleoside triphosphates and nucleoside diphosphates. In Staphylococcus aureus (strain MSSA476), this protein is Nucleoside triphosphate/diphosphate phosphatase.